We begin with the raw amino-acid sequence, 145 residues long: Probable WRKY transcription factor 75 (145 aa).

Residues 20 to 38 (SKPELHQGEEESSKVRSEG) show a composition bias toward basic and acidic residues. The tract at residues 20–55 (SKPELHQGEEESSKVRSEGCSKSVESSKKKGKKQRY) is disordered. Positions 61–126 (SQVDILDDGY…YEGVHSHPIE (66 aa)) form a DNA-binding region, WRKY.

Belongs to the WRKY group II-c family.

The protein localises to the nucleus. Its function is as follows. Transcription factor. Interacts specifically with the W box (5'-(T)TGAC[CT]-3'), a frequently occurring elicitor-responsive cis-acting element. The polypeptide is Probable WRKY transcription factor 75 (WRKY75) (Arabidopsis thaliana (Mouse-ear cress)).